Reading from the N-terminus, the 530-residue chain is MTRDFKPGDLIFAKMKGYPHWPARVDEVPDGAVKPPTNKLPIFFFGTHETAFLGPKDIFPYSENKEKYGKPNKRKGFNEGLWEIDNNPKVKFSSQQASTKQSNASSDVEVEEKETSVSKEDTDHEEKASNEDVTKAIDITTPKAARRGRKRKAEKQVETEEAGVVTTAAASVNLKVSPKRGRPAATEVKIPKPRGRPKMVKQPCPSESDMVTEEDKSKKKGQEEKQPKKQLKKDEEGQKEEDKPRKEPDKKEGKKEVESKRKNSAKTGVTSTSDSEEEGDDQESEKKRKGGRNFQTAHRRNMLKGQHEKEAADRKRKQEEQMETEQQNKDEGKKPEVKKVEKKRETSMDSRLQRIHAEIKNSLKIDNLDVNRCIEALDELASLQVTMQQAQKHTEMITTLKKIRRFKVSQIIMEKSTMLYNKFKNMFLVGEGDSVITQVLNKSLAEQRQHEEANKTKDQGKKGPNKKLDKEQTGSKTLNGGSDAPDSNQAQHNGDSSEESKDKHEASSKKKPSNEERETEISLKDSTLDN.

Residues 1-64 enclose the PWWP domain; sequence MTRDFKPGDL…PKDIFPYSEN (64 aa). Residue K75 forms a Glycyl lysine isopeptide (Lys-Gly) (interchain with G-Cter in SUMO2) linkage. The disordered stretch occupies residues 86 to 349; the sequence is NNPKVKFSSQ…VEKKRETSMD (264 aa). The segment covering 92 to 104 has biased composition (polar residues); sequence FSSQQASTKQSNA. Phosphoserine occurs at positions 102, 105, and 106. Basic and acidic residues predominate over residues 113–135; the sequence is KETSVSKEDTDHEEKASNEDVTK. Phosphothreonine is present on residues T115 and T122. S129 carries the post-translational modification Phosphoserine. Phosphothreonine is present on T141. Residues 144–153 show a composition bias toward basic residues; the sequence is AARRGRKRKA. Positions 146-156 match the Nuclear localization signal motif; it reads RRGRKRKAEKQ. T167 is modified (phosphothreonine). Residues S177 and S206 each carry the phosphoserine modification. Over residues 213–261 the composition is skewed to basic and acidic residues; it reads EEDKSKKKGQEEKQPKKQLKKDEEGQKEEDKPRKEPDKKEGKKEVESKR. S271 carries the post-translational modification Phosphoserine. The residue at position 272 (T272) is a Phosphothreonine. A phosphoserine mark is found at S273 and S275. Residues 274-283 are compositionally biased toward acidic residues; sequence DSEEEGDDQE. The segment covering 287–302 has biased composition (basic residues); that stretch reads KRKGGRNFQTAHRRNM. Positions 305–349 are enriched in basic and acidic residues; the sequence is GQHEKEAADRKRKQEEQMETEQQNKDEGKKPEVKKVEKKRETSMD. 2 coiled-coil regions span residues 306–334 and 371–395; these read QHEK…EGKK and NRCI…KHTE. The tract at residues 340 to 417 is integrase-binding domain (IBD); that stretch reads VEKKRETSMD…VSQIIMEKST (78 aa). S434 carries the phosphoserine modification. T437 carries the post-translational modification Phosphothreonine. S443 bears the Phosphoserine mark. The segment covering 446–473 has biased composition (basic and acidic residues); the sequence is EQRQHEEANKTKDQGKKGPNKKLDKEQT. The tract at residues 446-530 is disordered; that stretch reads EQRQHEEANK…ISLKDSTLDN (85 aa). Over residues 474–494 the composition is skewed to polar residues; that stretch reads GSKTLNGGSDAPDSNQAQHNG. The segment covering 498–530 has biased composition (basic and acidic residues); that stretch reads EESKDKHEASSKKKPSNEERETEISLKDSTLDN. At R517 the chain carries Citrulline. Residue S522 is modified to Phosphoserine. Phosphothreonine is present on T527.

It belongs to the HDGF family. Monomer. Interacts with IFRD1/PC4. Interacts (via IBD domain) with POGZ (via IBM motif) and CDCA7L (via IBM motifs). Interacts (via IBD domain) with KMT2A (via IBM motifs) with a moderate affinity whereas interacts with the KMT2A-MEN1 complex with a greater affinity; MEN1 enhances interaction of KMT2A with PSIP1. Interacts (via IBD domain) with IWS1 (via IBM motif), MED1 (via IBM motif) and DBF4 (via IBM motifs). In terms of assembly, (Microbial infection) Interacts (via IBD domain) with feline immunodeficiency virus (FIV) integrase (IN), determining its nuclear localization, its tight association with chromatin and its protection from the proteasome. Post-translationally, citrullinated by PADI4.

The protein localises to the nucleus. Its function is as follows. Transcriptional coactivator involved in neuroepithelial stem cell differentiation and neurogenesis. Involved in particular in lens epithelial cell gene regulation and stress responses. May play an important role in lens epithelial to fiber cell terminal differentiation. May play a protective role during stress-induced apoptosis. The chain is PC4 and SFRS1-interacting protein (PSIP1) from Felis catus (Cat).